Here is a 431-residue protein sequence, read N- to C-terminus: Serine--tRNA ligase (431 aa).

Residue 238–240 participates in L-serine binding; that stretch reads TAE. Residue 269 to 271 coordinates ATP; the sequence is RSE. Glu292 is an L-serine binding site. Residue 356–359 coordinates ATP; sequence EISS. Ser391 provides a ligand contact to L-serine.

It belongs to the class-II aminoacyl-tRNA synthetase family. Type-1 seryl-tRNA synthetase subfamily. As to quaternary structure, homodimer. The tRNA molecule binds across the dimer.

The protein localises to the cytoplasm. It carries out the reaction tRNA(Ser) + L-serine + ATP = L-seryl-tRNA(Ser) + AMP + diphosphate + H(+). The catalysed reaction is tRNA(Sec) + L-serine + ATP = L-seryl-tRNA(Sec) + AMP + diphosphate + H(+). The protein operates within aminoacyl-tRNA biosynthesis; selenocysteinyl-tRNA(Sec) biosynthesis; L-seryl-tRNA(Sec) from L-serine and tRNA(Sec): step 1/1. In terms of biological role, catalyzes the attachment of serine to tRNA(Ser). Is also able to aminoacylate tRNA(Sec) with serine, to form the misacylated tRNA L-seryl-tRNA(Sec), which will be further converted into selenocysteinyl-tRNA(Sec). The sequence is that of Serine--tRNA ligase from Bdellovibrio bacteriovorus (strain ATCC 15356 / DSM 50701 / NCIMB 9529 / HD100).